Consider the following 115-residue polypeptide: Large ribosomal subunit protein bL20 (115 aa).

Belongs to the bacterial ribosomal protein bL20 family.

Binds directly to 23S ribosomal RNA and is necessary for the in vitro assembly process of the 50S ribosomal subunit. It is not involved in the protein synthesizing functions of that subunit. The sequence is that of Large ribosomal subunit protein bL20 from Mycoplasmoides gallisepticum (strain R(low / passage 15 / clone 2)) (Mycoplasma gallisepticum).